A 558-amino-acid chain; its full sequence is Phosphatidylserine lipase ABHD16A (558 aa).

A run of 2 helical transmembrane segments spans residues 60-80 (ILAL…FAFF) and 93-113 (VVPF…VACL). Over 114–558 (RGIGRWTNPQ…AQNFQMPWHL (445 aa)) the chain is Cytoplasmic. An AB hydrolase-1 domain is found at 281–407 (LVICCEGNAG…LVTRTVRQHL (127 aa)). Residues Ser355, Asp430, and His507 each act as charge relay system in the active site.

It belongs to the AB hydrolase superfamily. ABHD16 family.

It is found in the membrane. The catalysed reaction is 1-heptadecanoyl-2-(5Z,8Z,11Z,14Z-eicosatetraenoyl)-sn-glycero-3-phosphoserine + H2O = 1-heptadecanoyl-sn-glycero-3-phosphoserine + (5Z,8Z,11Z,14Z)-eicosatetraenoate + H(+). The enzyme catalyses 1-hexadecanoyl-2-(9Z-octadecenoyl)-sn-glycero-3-phospho-L-serine + H2O = 1-hexadecanoyl-sn-glycero-3-phospho-L-serine + (9Z)-octadecenoate + H(+). It catalyses the reaction 1-octadecanoyl-2-(9Z,12Z-octadecadienoyl)-sn-glycero-3-phosphoserine + H2O = 1-octadecanoyl-sn-glycero-3-phosphoserine + (9Z,12Z)-octadecadienoate + H(+). It carries out the reaction 1-heptadecanoyl-2-(5Z,8Z,11Z,14Z-eicosatetraenoyl)-sn-glycero-3-phosphocholine + H2O = 1-heptadecanoyl-sn-glycero-3-phosphocholine + (5Z,8Z,11Z,14Z)-eicosatetraenoate + H(+). The catalysed reaction is 1-hexadecanoyl-2-(9Z-octadecenoyl)-sn-glycero-3-phosphoglycerol + H2O = 1-hexadecanoyl-sn-glycero-3-phosphoglycerol + (9Z)-octadecenoate + H(+). The enzyme catalyses 1-hexadecanoyl-2-(9Z-octadecenoyl)-sn-glycero-3-phospho-(1D-myo-inositol) + H2O = 1-hexadecanoyl-sn-glycero-3-phospho-(1D-myo-inositol) + (9Z)-octadecenoate + H(+). It catalyses the reaction 1-heptadecanoyl-2-(5Z,8Z,11Z,14Z-eicosatetraenoyl)-sn-glycero-3-phosphoethanolamine + H2O = 1-heptadecanoyl-sn-glycero-3-phosphoethanolamine + (5Z,8Z,11Z,14Z)-eicosatetraenoate + H(+). It carries out the reaction 1-hexadecanoyl-2-(9Z-octadecenoyl)-sn-glycero-3-phospho-(1'-sn-glycerol) + H2O = 1-hexadecanoyl-sn-glycero-3-phospho-(1'-sn-glycerol) + (9Z)-octadecenoate + H(+). The catalysed reaction is Hydrolyzes glycerol monoesters of long-chain fatty acids.. The enzyme catalyses 1-tetradecanoylglycerol + H2O = tetradecanoate + glycerol + H(+). It catalyses the reaction 2-hexadecanoylglycerol + H2O = glycerol + hexadecanoate + H(+). It carries out the reaction 1-(9Z-octadecenoyl)-glycerol + H2O = glycerol + (9Z)-octadecenoate + H(+). The catalysed reaction is 2-(9Z-octadecenoyl)-glycerol + H2O = glycerol + (9Z)-octadecenoate + H(+). The enzyme catalyses 2-(9Z,12Z-octadecadienoyl)-glycerol + H2O = (9Z,12Z)-octadecadienoate + glycerol + H(+). It catalyses the reaction 1-(5Z,8Z,11Z,14Z-eicosatetraenoyl)-glycerol + H2O = glycerol + (5Z,8Z,11Z,14Z)-eicosatetraenoate + H(+). It carries out the reaction 2-(5Z,8Z,11Z,14Z-eicosatetraenoyl)-glycerol + H2O = glycerol + (5Z,8Z,11Z,14Z)-eicosatetraenoate + H(+). The catalysed reaction is prostaglandin D2-1-glycerol ester + H2O = prostaglandin D2 + glycerol + H(+). The enzyme catalyses 2-glyceryl-15-deoxy-Delta(12,14)-prostaglandin J2 + H2O = 15-deoxy-Delta(12,14)-prostaglandin J2 + glycerol + H(+). It catalyses the reaction 1-(9Z,12Z-octadecadienoyl)-glycerol + H2O = (9Z,12Z)-octadecadienoate + glycerol + H(+). Inhibited by beta-lactone-based lipid inhibitors, such as beta-lactone palmostatin-B. Functionally, phosphatidylserine (PS) lipase that mediates the hydrolysis of phosphatidylserine to generate lysophosphatidylserine (LPS). LPS constitutes a class of signaling lipids that regulates immunological and neurological processes. Has no activity towards diacylglycerol, triacylglycerol or lysophosphatidylserine lipase. Also has monoacylglycerol lipase activity, with preference for 1-(9Z,12Z-octadecadienoyl)-glycerol (1-LG) and 2-glyceryl-15-deoxy-Delta(12,14)-prostaglandin J2 (15d-PGJ(2)-G). This is Phosphatidylserine lipase ABHD16A from Homo sapiens (Human).